The primary structure comprises 370 residues: MSGDFLALAQPGVQQLSPYVPGKPVDELARELDIDPATIVKLASNENPLGASPKALAAIRDELAELTRYPDGNGFALKSLLAERCGVEIDQVTLGNGSNDILELVARAYLAPGLNAVFSEHAFAVYPIVTQAVGAQARVVPAKNWGHDLPAMLKAIDDRTRVVFIANPNNPTGTWFGAEELDEFLQDVPAHVLVVLDEAYIEYAEGSDLPDGLDFLAAYPNLLVSRTFSKAYGLAALRVGYGLSTPVVADVLNRVRQPFNVNSLALAAACAALEDVDYLAESRRLNEAGMQQLEAGFRDLGLRWIPSKGNFIAVDLGREAAPIFQELLREGVIVRPVANYGMPNHLRITIGLPAENTRFLEALAKVLARA.

Lys-230 is modified (N6-(pyridoxal phosphate)lysine).

It belongs to the class-II pyridoxal-phosphate-dependent aminotransferase family. Histidinol-phosphate aminotransferase subfamily. Homodimer. Pyridoxal 5'-phosphate serves as cofactor.

It carries out the reaction L-histidinol phosphate + 2-oxoglutarate = 3-(imidazol-4-yl)-2-oxopropyl phosphate + L-glutamate. It participates in amino-acid biosynthesis; L-histidine biosynthesis; L-histidine from 5-phospho-alpha-D-ribose 1-diphosphate: step 7/9. In Pseudomonas fluorescens (strain ATCC BAA-477 / NRRL B-23932 / Pf-5), this protein is Histidinol-phosphate aminotransferase 2.